A 651-amino-acid polypeptide reads, in one-letter code: MQDLFGSVRRSLVFRSTTDDENQENHPPPFPSLLADKITSCIRKSMVFAKSQSPPNNSTVQIKPPIRWRKGQLIGRGAFGTVYMGMNLDSGELLAVKQVLITSNCASKEKTQAHIQELEEEVKLLKNLSHPNIVRYLGTVREDETLNILLEFVPGGSISSLLEKFGAFPESVVRTYTNQLLLGLEYLHNHAIMHRDIKGANILVDNQGCIKLADFGASKQVAELATISGAKSMKGTPYWMAPEVILQTGHSFSADIWSVGCTVIEMVTGKAPWSQQYKEIAAIFHIGTTKSHPPIPDNISSDANDFLLKCLQQEPNLRPTASELLKHPFVTGKQKESASKDLTSFMDNSCSPLPSELTNITSYQTSTSDDVGDICNLGSLTCTLAFPEKSIQNNSLCLKSNNGYDDDDDNDMCLIDDENFLTYNGETGPSLDNNTDAKKSCDTMSEISDILKCKFDENSGNGETETKVSMEVDHPSYSEDENELTESKIKAFLDDKAAELKKLQTPLYEEFYNGMITCSPICMESNINNNKREEAPRGFLKLPPKSRSPSQGHIGRSPSRATDAACCSKSPESGNSSGAPKNSNASAGAEQESNSQSVALSEIERKWKEELDQELERKRREITRQAGMGSSPRDRSLSRHREKSRFASPGK.

Residues 68 to 330 (WRKGQLIGRG…ASELLKHPFV (263 aa)) enclose the Protein kinase domain. ATP-binding positions include 74 to 82 (IGRGAFGTV) and Lys-97. Residues 105–130 (CASKEKTQAHIQELEEEVKLLKNLSH) adopt a coiled-coil conformation. Glycyl lysine isopeptide (Lys-Gly) (interchain with G-Cter in ubiquitin) cross-links involve residues Lys-108 and Lys-110. Residue Asp-196 is the Proton acceptor of the active site. Disordered stretches follow at residues 460–483 (GNGE…DENE), 537–601 (RGFL…VALS), and 618–651 (KRRE…SPGK). Residues 464 to 477 (TETKVSMEVDHPSY) show a composition bias toward basic and acidic residues. Residues 570 to 599 (SPESGNSSGAPKNSNASAGAEQESNSQSVA) show a composition bias toward polar residues. The stretch at 605 to 628 (RKWKEELDQELERKRREITRQAGM) forms a coiled coil.

It belongs to the protein kinase superfamily. STE Ser/Thr protein kinase family. MAP kinase kinase kinase subfamily. As to expression, expressed in roots and flowers.

Its subcellular location is the cytoplasm. It localises to the cytoskeleton. The catalysed reaction is L-seryl-[protein] + ATP = O-phospho-L-seryl-[protein] + ADP + H(+). It carries out the reaction L-threonyl-[protein] + ATP = O-phospho-L-threonyl-[protein] + ADP + H(+). Functionally, involved in cortical microtubules organization and stabilization by regulating the phosphorylation state of microtubule-associated proteins such as MAP65-1. This Arabidopsis thaliana (Mouse-ear cress) protein is Mitogen-activated protein kinase kinase kinase 2 (ANP2).